The following is a 401-amino-acid chain: G2/mitotic-specific cyclin-B1 (401 aa).

Belongs to the cyclin family. Cyclin AB subfamily. In terms of assembly, interacts with the CDK1 protein kinase to form a serine/threonine kinase holoenzyme complex also known as maturation promoting factor (MPF). The cyclin subunit imparts substrate specificity to the complex.

In terms of biological role, essential for the control of the cell cycle at the G2/M (mitosis) transition. The chain is G2/mitotic-specific cyclin-B1 (ccnb1) from Oryzias luzonensis (Luzon ricefish).